A 629-amino-acid chain; its full sequence is MSRLADRAKSYPLASFGAALLPPELGGPLPAQFVQRVDRYVTRLPATSRFAVRAGLASLAAASYLTTGRSLPRLHPDERARVLHRIAALSPEVAAAVEGLKAIVLLANGADTYAHELLARAQEHDAARPDAELTVILSADSPSVTRADAVVVGSGAGGAMVARTLARAGLDVVVLEEGRRWTVEEFRSTHPVDRYAGLYRGAGATVALGRPAVVLPMGRAVGGTTVVNSGTCFRPSLAVQRRWRDEFGLGLADPDQLGRRLDDAEQTLRVAPVPLEIMGRNGRLLLQAAKSLGWRAAPIPRNAPGCRGCCQCAIGCPSNAKFGVHLNALPQACAAGARIISWARVERILHRAGRAYGVRARRPDGTTLDVLADAVVVAAGATETPGLLRRSGLGGHPRLGHNLALHPATMLAGLFDDDVFAWRGVLQSAAVHEFHESDGVLIEATSTPPGMGSMVFPGYGAELLRWLDRAPQIATFGAMVADRGVGTVRSVRGETVVRYDIAPGEIAKLRVALQAIGRLLFAAGAVEVLTGIPGAPPMRSLPELQDVLRRANPRSLHLAAFHPTGTAAAGADEQLCPVDATGRLRGVEGVWVADASILPSCPEVNPQLSIMAMALAVADQTVAKVVGVR.

Residue His-562 is the Proton acceptor of the active site.

It belongs to the GMC oxidoreductase family. It depends on FAD as a cofactor.

This is an uncharacterized protein from Mycobacterium tuberculosis (strain CDC 1551 / Oshkosh).